We begin with the raw amino-acid sequence, 354 residues long: DNA polymerase IV (354 aa).

One can recognise a UmuC domain in the interval 14–198 (IIHIDMDAFF…MDIAKFHGVG (185 aa)). Mg(2+) is bound by residues aspartate 18 and aspartate 116. Residue glutamate 117 is part of the active site.

The protein belongs to the DNA polymerase type-Y family. In terms of assembly, monomer. Mg(2+) is required as a cofactor.

Its subcellular location is the cytoplasm. It carries out the reaction DNA(n) + a 2'-deoxyribonucleoside 5'-triphosphate = DNA(n+1) + diphosphate. Its function is as follows. Poorly processive, error-prone DNA polymerase involved in untargeted mutagenesis. Copies undamaged DNA at stalled replication forks, which arise in vivo from mismatched or misaligned primer ends. These misaligned primers can be extended by PolIV. Exhibits no 3'-5' exonuclease (proofreading) activity. May be involved in translesional synthesis, in conjunction with the beta clamp from PolIII. The chain is DNA polymerase IV from Streptococcus gordonii (strain Challis / ATCC 35105 / BCRC 15272 / CH1 / DL1 / V288).